The chain runs to 882 residues: MPALACLRRLCRHLSPQAVLFLLFVFCLFSVFVSAYYLYGWNRGLEPSADASESDCGDPPPVAPSRLLPIKPVQAVAPSRTDPLVLVFVESLYSQLGQEVVAILESSRFKYRTEIAPGKGDMPTLTDKGRGRFALIIYENILKYVNLDAWNRELLDKYCVAYGVGIIGFFKANENSLLSAQLKGFPLFLHSNLGLKDCSINPKSPLLYVTRPSEVEKGVLPGEDWTVFQSNHSTYEPVLLAKTRSSESIPHLGADAGLHAALHATVVQDLGLHDGIQRVLFGNNLNFWLHKLVFVDAVAFLTGKRLSLPLDRYILVDIDDIFVGKEGTRMKVEDVKALFDTQNELRTHIPNFTFNLGYSGKFFHTGTDAEDAGDDLLLSYVKEFWWFPHMWSHMQPHLFHNQSVLAEQMALNKKFAVEHGIPTDMGYAVAPHHSGVYPVHVQLYEAWKQVWGIRVTSTEEYPHLKPARYRRGFIHNGIMVLPRQTCGLFTHTIFYNEYPGGSSELDKIINGGELFLTVLLNPISIFMTHLSNYGNDRLGLYTFKHLVRFLHSWTNLRLQTLPPVQLAQKYFQIFSEEKDPLWQDPCEDKRHKDIWSKEKTCDRFPKLLIIGPQKTGTTALYLFLGMHPDLSSNYPSSETFEEIQFFNGHNYHKGIDWYMEFFPIPSNTTSDFYFEKSANYFDSEVAPRRAAALLPKAKILSILINPADRAYSWYQHQRAHDDPVALKYTFHEVITAGPDASSKLRALQNRCLVPGWYATHIERWLSAFHANQILVLDGKLLRTEPAKVMDTVQKFLGVTSTVDYHKTLAFDPKKGFWCQLLEGGKTKCLGKSKGRKYPEMDLDSRAFLKDYFRDHNIELSKLLYKMGQTLPTWLREDLQNTR.

Residues 1 to 17 lie on the Cytoplasmic side of the membrane; sequence MPALACLRRLCRHLSPQ. The interval 1–169 is sufficient for localization to Golgi membrane; that stretch reads MPALACLRRL…VAYGVGIIGF (169 aa). Residues 18-38 traverse the membrane as a helical; Signal-anchor for type II membrane protein segment; the sequence is AVLFLLFVFCLFSVFVSAYYL. Residues 39–882 are Lumenal-facing; the sequence is YGWNRGLEPS…WLREDLQNTR (844 aa). A heparan sulfate N-deacetylase 1 region spans residues 40–598; it reads GWNRGLEPSA…KRHKDIWSKE (559 aa). N-linked (GlcNAc...) asparagine glycosylation is found at N231, N351, and N401. Residues 599–882 are heparan sulfate N-sulfotransferase 1; sequence KTCDRFPKLL…WLREDLQNTR (284 aa). K614 serves as the catalytic For sulfotransferase activity. 614–618 contacts adenosine 3',5'-bisphosphate; sequence KTGTT. N-linked (GlcNAc...) asparagine glycosylation is present at N667. 2 residues coordinate adenosine 3',5'-bisphosphate: S712 and W817. C818 and C828 are joined by a disulfide. 833–837 lines the adenosine 3',5'-bisphosphate pocket; that stretch reads KGRKY.

The protein belongs to the sulfotransferase 1 family. NDST subfamily. Monomer. Interacts with heparan sulfate co-polymerase subunits EXT1 and EXT2. As to expression, widely expressed in adult and throughout development.

Its subcellular location is the golgi apparatus membrane. It localises to the golgi apparatus. It is found in the trans-Golgi network membrane. The protein localises to the cis-Golgi network membrane. The enzyme catalyses N-acetyl-alpha-D-glucosaminyl-[heparan sulfate](n) + H2O = alpha-D-glucosaminyl-[heparan sulfate](n) + acetate. It catalyses the reaction alpha-D-glucosaminyl-[heparan sulfate](n) + 3'-phosphoadenylyl sulfate = N-sulfo-alpha-D-glucosaminyl-[heparan sulfate](n) + adenosine 3',5'-bisphosphate + 2 H(+). Its pathway is glycan metabolism; heparan sulfate biosynthesis. It participates in glycan metabolism; heparin biosynthesis. Inhibited by long N-sulfated sequences (more than 6 sugar residues) accumulating in its substrates heparan sulfate, and heparin. Functionally, essential bifunctional enzyme that catalyzes both the N-deacetylation and the N-sulfation of glucosamine (GlcNAc) of the glycosaminoglycan in heparan sulfate. Modifies the GlcNAc-GlcA disaccharide repeating sugar backbone to make N-sulfated heparosan, a prerequisite substrate for later modifications in heparin biosynthesis. Plays a role in determining the extent and pattern of sulfation of heparan sulfate. Participates in biosynthesis of heparan sulfate that can ultimately serve as L-selectin ligands, thereby playing a role in inflammatory response. Required for the exosomal release of SDCBP, CD63 and syndecan. This Mus musculus (Mouse) protein is Bifunctional heparan sulfate N-deacetylase/N-sulfotransferase 1.